Reading from the N-terminus, the 154-residue chain is Myoglobin (154 aa).

Residues 2–148 (GLSDGEWQQV…FRNDIAAKYK (147 aa)) form the Globin domain. The residue at position 4 (Ser4) is a Phosphoserine. Residue His65 participates in nitrite binding. His65 provides a ligand contact to O2. His94 is a binding site for heme b.

It belongs to the globin family. In terms of assembly, monomeric.

Its subcellular location is the cytoplasm. The protein resides in the sarcoplasm. The catalysed reaction is Fe(III)-heme b-[protein] + nitric oxide + H2O = Fe(II)-heme b-[protein] + nitrite + 2 H(+). It catalyses the reaction H2O2 + AH2 = A + 2 H2O. In terms of biological role, monomeric heme protein which primary function is to store oxygen and facilitate its diffusion within muscle tissues. Reversibly binds oxygen through a pentacoordinated heme iron and enables its timely and efficient release as needed during periods of heightened demand. Depending on the oxidative conditions of tissues and cells, and in addition to its ability to bind oxygen, it also has a nitrite reductase activity whereby it regulates the production of bioactive nitric oxide. Under stress conditions, like hypoxia and anoxia, it also protects cells against reactive oxygen species thanks to its pseudoperoxidase activity. The protein is Myoglobin (MB) of Equus quagga burchellii (Burchell's zebra).